A 382-amino-acid chain; its full sequence is Queuine tRNA-ribosyltransferase (382 aa).

Residue D96 is the Proton acceptor of the active site. Substrate is bound by residues 96-100 (DSGGF), D151, Q194, and G221. The RNA binding stretch occupies residues 252–258 (GVGAPDS). D271 (nucleophile) is an active-site residue. The tract at residues 276–280 (TRIAR) is RNA binding; important for wobble base 34 recognition. Positions 309, 311, 314, and 340 each coordinate Zn(2+).

This sequence belongs to the queuine tRNA-ribosyltransferase family. In terms of assembly, homodimer. Within each dimer, one monomer is responsible for RNA recognition and catalysis, while the other monomer binds to the replacement base PreQ1. Requires Zn(2+) as cofactor.

The catalysed reaction is 7-aminomethyl-7-carbaguanine + guanosine(34) in tRNA = 7-aminomethyl-7-carbaguanosine(34) in tRNA + guanine. The protein operates within tRNA modification; tRNA-queuosine biosynthesis. Its function is as follows. Catalyzes the base-exchange of a guanine (G) residue with the queuine precursor 7-aminomethyl-7-deazaguanine (PreQ1) at position 34 (anticodon wobble position) in tRNAs with GU(N) anticodons (tRNA-Asp, -Asn, -His and -Tyr). Catalysis occurs through a double-displacement mechanism. The nucleophile active site attacks the C1' of nucleotide 34 to detach the guanine base from the RNA, forming a covalent enzyme-RNA intermediate. The proton acceptor active site deprotonates the incoming PreQ1, allowing a nucleophilic attack on the C1' of the ribose to form the product. After dissociation, two additional enzymatic reactions on the tRNA convert PreQ1 to queuine (Q), resulting in the hypermodified nucleoside queuosine (7-(((4,5-cis-dihydroxy-2-cyclopenten-1-yl)amino)methyl)-7-deazaguanosine). In Lactococcus lactis subsp. lactis (strain IL1403) (Streptococcus lactis), this protein is Queuine tRNA-ribosyltransferase.